Reading from the N-terminus, the 262-residue chain is Ribosomal RNA small subunit methyltransferase A (262 aa).

Positions 14, 16, 41, 63, 85, and 105 each coordinate S-adenosyl-L-methionine.

This sequence belongs to the class I-like SAM-binding methyltransferase superfamily. rRNA adenine N(6)-methyltransferase family. RsmA subfamily.

The protein resides in the cytoplasm. It carries out the reaction adenosine(1518)/adenosine(1519) in 16S rRNA + 4 S-adenosyl-L-methionine = N(6)-dimethyladenosine(1518)/N(6)-dimethyladenosine(1519) in 16S rRNA + 4 S-adenosyl-L-homocysteine + 4 H(+). Specifically dimethylates two adjacent adenosines (A1518 and A1519) in the loop of a conserved hairpin near the 3'-end of 16S rRNA in the 30S particle. May play a critical role in biogenesis of 30S subunits. In Maridesulfovibrio salexigens (strain ATCC 14822 / DSM 2638 / NCIMB 8403 / VKM B-1763) (Desulfovibrio salexigens), this protein is Ribosomal RNA small subunit methyltransferase A.